The sequence spans 457 residues: Argininosuccinate lyase (457 aa).

It belongs to the lyase 1 family. Argininosuccinate lyase subfamily.

Its subcellular location is the cytoplasm. It carries out the reaction 2-(N(omega)-L-arginino)succinate = fumarate + L-arginine. It participates in amino-acid biosynthesis; L-arginine biosynthesis; L-arginine from L-ornithine and carbamoyl phosphate: step 3/3. This is Argininosuccinate lyase from Haemophilus influenzae (strain ATCC 51907 / DSM 11121 / KW20 / Rd).